We begin with the raw amino-acid sequence, 292 residues long: Ribosomal protein L11 methyltransferase (292 aa).

Residues threonine 144, glycine 165, aspartate 187, and asparagine 229 each coordinate S-adenosyl-L-methionine.

This sequence belongs to the methyltransferase superfamily. PrmA family.

It is found in the cytoplasm. It catalyses the reaction L-lysyl-[protein] + 3 S-adenosyl-L-methionine = N(6),N(6),N(6)-trimethyl-L-lysyl-[protein] + 3 S-adenosyl-L-homocysteine + 3 H(+). Its function is as follows. Methylates ribosomal protein L11. This Saccharophagus degradans (strain 2-40 / ATCC 43961 / DSM 17024) protein is Ribosomal protein L11 methyltransferase.